Consider the following 143-residue polypeptide: UPF0179 protein PTO0851 (143 aa).

Belongs to the UPF0179 family.

This is UPF0179 protein PTO0851 from Picrophilus torridus (strain ATCC 700027 / DSM 9790 / JCM 10055 / NBRC 100828 / KAW 2/3).